Consider the following 132-residue polypeptide: Small ribosomal subunit protein uS8 (132 aa).

The protein belongs to the universal ribosomal protein uS8 family. As to quaternary structure, part of the 30S ribosomal subunit. Contacts proteins S5 and S12.

One of the primary rRNA binding proteins, it binds directly to 16S rRNA central domain where it helps coordinate assembly of the platform of the 30S subunit. This Psychrobacter sp. (strain PRwf-1) protein is Small ribosomal subunit protein uS8.